We begin with the raw amino-acid sequence, 87 residues long: U3-theraphotoxin-Hhn1a 18 (87 aa).

A signal peptide spans 1–24 (MVNTKASMFLTFAGLVLLFVVCYA). A propeptide spanning residues 25–52 (SESEEKEFPKEMLSSIFAVDNDFKQEER) is cleaved from the precursor. Cystine bridges form between cysteine 54–cysteine 67, cysteine 61–cysteine 72, and cysteine 66–cysteine 79.

It belongs to the neurotoxin 10 (Hwtx-1) family. 51 (Hntx-8) subfamily. Hntx-8 sub-subfamily. In terms of tissue distribution, expressed by the venom gland.

The protein localises to the secreted. Its function is as follows. Ion channel inhibitor. The sequence is that of U3-theraphotoxin-Hhn1a 18 from Cyriopagopus hainanus (Chinese bird spider).